The chain runs to 299 residues: Phosphoribosylaminoimidazole-succinocarboxamide synthase (299 aa).

The segment at 259–279 is disordered; that stretch reads PESGWDRKSEQPPPPLPQHVV.

The protein belongs to the SAICAR synthetase family.

The catalysed reaction is 5-amino-1-(5-phospho-D-ribosyl)imidazole-4-carboxylate + L-aspartate + ATP = (2S)-2-[5-amino-1-(5-phospho-beta-D-ribosyl)imidazole-4-carboxamido]succinate + ADP + phosphate + 2 H(+). It participates in purine metabolism; IMP biosynthesis via de novo pathway; 5-amino-1-(5-phospho-D-ribosyl)imidazole-4-carboxamide from 5-amino-1-(5-phospho-D-ribosyl)imidazole-4-carboxylate: step 1/2. The protein is Phosphoribosylaminoimidazole-succinocarboxamide synthase of Streptomyces avermitilis (strain ATCC 31267 / DSM 46492 / JCM 5070 / NBRC 14893 / NCIMB 12804 / NRRL 8165 / MA-4680).